We begin with the raw amino-acid sequence, 752 residues long: Photosystem I P700 chlorophyll a apoprotein A1 (752 aa).

Transmembrane regions (helical) follow at residues 73–96 (IFSA…FHGA), 159–182 (LYWT…FHYH), 198–222 (MNHH…HISL), 294–312 (TAHH…GHMY), 349–372 (WHAQ…HHMY), 388–414 (LSLF…IFMV), 436–458 (AIIS…LYIH), and 533–551 (FLVH…LILL). The [4Fe-4S] cluster site is built by cysteine 575 and cysteine 584. 2 helical membrane-spanning segments follow: residues 591 to 612 (HIFL…HFSW) and 666 to 688 (LSAY…MFLF). Histidine 677 serves as a coordination point for chlorophyll a'. Methionine 685 and tyrosine 693 together coordinate chlorophyll a. Tryptophan 694 is a phylloquinone binding site. A helical membrane pass occupies residues 726–746 (AVGLAHYLLGGIGTTWSFFLA).

This sequence belongs to the PsaA/PsaB family. The PsaA/B heterodimer binds the P700 chlorophyll special pair and subsequent electron acceptors. PSI consists of a core antenna complex that captures photons, and an electron transfer chain that converts photonic excitation into a charge separation. The eukaryotic PSI reaction center is composed of at least 11 subunits. P700 is a chlorophyll a/chlorophyll a' dimer, A0 is one or more chlorophyll a, A1 is one or both phylloquinones and FX is a shared 4Fe-4S iron-sulfur center. is required as a cofactor.

The protein resides in the plastid. It localises to the chloroplast thylakoid membrane. The enzyme catalyses reduced [plastocyanin] + hnu + oxidized [2Fe-2S]-[ferredoxin] = oxidized [plastocyanin] + reduced [2Fe-2S]-[ferredoxin]. Functionally, psaA and PsaB bind P700, the primary electron donor of photosystem I (PSI), as well as the electron acceptors A0, A1 and FX. PSI is a plastocyanin/cytochrome c6-ferredoxin oxidoreductase, converting photonic excitation into a charge separation, which transfers an electron from the donor P700 chlorophyll pair to the spectroscopically characterized acceptors A0, A1, FX, FA and FB in turn. Oxidized P700 is reduced on the lumenal side of the thylakoid membrane by plastocyanin or cytochrome c6. This is Photosystem I P700 chlorophyll a apoprotein A1 from Emiliania huxleyi (Coccolithophore).